Consider the following 639-residue polypeptide: Cystathionine gamma-synthase (639 aa).

The residue at position 443 (Lys443) is an N6-(pyridoxal phosphate)lysine.

It belongs to the trans-sulfuration enzymes family. MET7 subfamily. Pyridoxal 5'-phosphate serves as cofactor.

It localises to the cytoplasm. The protein localises to the nucleus. It catalyses the reaction O-succinyl-L-homoserine + L-cysteine = L,L-cystathionine + succinate + H(+). The protein operates within amino-acid biosynthesis; L-methionine biosynthesis via de novo pathway; L-cystathionine from O-succinyl-L-homoserine: step 1/1. Catalyzes the formation of L-cystathionine from O-succinyl-L-homoserine (OSHS) and L-cysteine, via a gamma-replacement reaction. In the absence of thiol, catalyzes gamma-elimination to form 2-oxobutanoate, succinate and ammonia. The polypeptide is Cystathionine gamma-synthase (Saccharomyces cerevisiae (strain ATCC 204508 / S288c) (Baker's yeast)).